A 271-amino-acid polypeptide reads, in one-letter code: Mannosyl-3-phosphoglycerate phosphatase (271 aa).

D13 acts as the Nucleophile in catalysis. 3 residues coordinate Mg(2+): D13, D15, and D214.

Belongs to the HAD-like hydrolase superfamily. MPGP family. Requires Mg(2+) as cofactor.

The protein localises to the cytoplasm. It catalyses the reaction 2-O-(alpha-D-mannosyl)-3-phosphoglycerate + H2O = (2R)-2-O-(alpha-D-mannosyl)-glycerate + phosphate. This is Mannosyl-3-phosphoglycerate phosphatase from Escherichia coli (strain 55989 / EAEC).